Consider the following 154-residue polypeptide: Transcriptional repressor NrdR (154 aa).

A zinc finger lies at 3–34 (CPFCRHPDSRVVDSRETDEGQAIRRRRSCPEC). Residues 46–136 (LAVVKRSGVT…VYRSFSSAED (91 aa)) form the ATP-cone domain.

Belongs to the NrdR family. Requires Zn(2+) as cofactor.

Functionally, negatively regulates transcription of bacterial ribonucleotide reductase nrd genes and operons by binding to NrdR-boxes. The sequence is that of Transcriptional repressor NrdR from Mycolicibacterium gilvum (strain PYR-GCK) (Mycobacterium gilvum (strain PYR-GCK)).